The following is a 496-amino-acid chain: Glycylpeptide N-tetradecanoyltransferase 1 (496 aa).

The disordered stretch occupies residues 1 to 81 (MADESETAVK…DSTQDQPVKM (81 aa)). Ser-31 and Ser-47 each carry phosphoserine. Basic residues predominate over residues 55–66 (KKKKKKQKKKKE). Ser-83 carries the post-translational modification Phosphoserine. Tetradecanoyl-CoA is bound by residues Gln-118, Phe-119, Trp-120, Phe-247, Leu-248, Cys-249, Val-250, Ser-256, Arg-258, Val-259, and Ala-260.

Belongs to the NMT family.

Its subcellular location is the cytoplasm. The protein resides in the cytosol. It is found in the membrane. It carries out the reaction N-terminal glycyl-[protein] + tetradecanoyl-CoA = N-tetradecanoylglycyl-[protein] + CoA + H(+). The enzyme catalyses N-terminal glycyl-L-lysyl-[protein] + tetradecanoyl-CoA = N-terminal glycyl-(N(6)-tetradecanoyl)-L-lysyl-[protein] + CoA + H(+). In terms of biological role, adds a myristoyl group to the N-terminal glycine residue of certain cellular and viral proteins. Also able to mediate N-terminal lysine myristoylation of proteins: catalyzes myristoylation of ARF6 on both 'Gly-2' and 'Lys-3'. Lysine myristoylation is required to maintain ARF6 on membranes during the GTPase cycle. This is Glycylpeptide N-tetradecanoyltransferase 1 (Nmt1) from Rattus norvegicus (Rat).